The primary structure comprises 450 residues: F-box protein KIB3 (450 aa).

In terms of domain architecture, F-box spans 20–50 (DLVRLILERLSFVDFHRARCVSSTWYVASKS).

It localises to the cytoplasm. It is found in the nucleus. The protein resides in the nucleolus. In terms of biological role, component of SCF(ASK-cullin-F-box) E3 ubiquitin ligase complexes, which may mediate the ubiquitination and subsequent proteasomal degradation of target proteins. Required for brassinosteroid (BR) signal transduction. Mediates ASK7/BIN2/SK21 inactivation both by competing with substrate binding (e.g. BZR1) and by promoting its ubiquitination and subsequent proteasomal degradation. This chain is F-box protein KIB3, found in Arabidopsis thaliana (Mouse-ear cress).